Reading from the N-terminus, the 97-residue chain is uncharacterized protein (97 aa).

This is an uncharacterized protein from Emericella nidulans (Aspergillus nidulans).